The chain runs to 699 residues: D-(-)-3-hydroxybutyrate oligomer hydrolase (699 aa).

A signal peptide spans 1–33 (MTAIRGGSRRAPGLALALLGGVLLGACHGDENA). Residue serine 311 is the Charge relay system of the active site.

This sequence belongs to the D-(-)-3-hydroxybutyrate oligomer hydrolase family.

The protein localises to the secreted. It catalyses the reaction (3R)-hydroxybutanoate dimer + H2O = 2 (R)-3-hydroxybutanoate + H(+). It functions in the pathway lipid metabolism; butanoate metabolism. Participates in the degradation of poly-3-hydroxybutyrate (PHB). It works downstream of poly(3-hydroxybutyrate) depolymerase, hydrolyzing D(-)-3-hydroxybutyrate oligomers of various length (3HB-oligomers) into 3HB-monomers. The chain is D-(-)-3-hydroxybutyrate oligomer hydrolase from Burkholderia pseudomallei (strain 1106a).